The following is a 385-amino-acid chain: tRNA-specific 2-thiouridylase MnmA (385 aa).

ATP contacts are provided by residues 27 to 34 (AMSGGVDS) and Leu-53. Catalysis depends on Cys-121, which acts as the Nucleophile. Cys-121 and Cys-217 are joined by a disulfide. Gly-145 contacts ATP. The interaction with tRNA stretch occupies residues 167–169 (KDQ). Cys-217 functions as the Cysteine persulfide intermediate in the catalytic mechanism.

It belongs to the MnmA/TRMU family.

It localises to the cytoplasm. It catalyses the reaction S-sulfanyl-L-cysteinyl-[protein] + uridine(34) in tRNA + AH2 + ATP = 2-thiouridine(34) in tRNA + L-cysteinyl-[protein] + A + AMP + diphosphate + H(+). Catalyzes the 2-thiolation of uridine at the wobble position (U34) of tRNA, leading to the formation of s(2)U34. The protein is tRNA-specific 2-thiouridylase MnmA of Sorangium cellulosum (strain So ce56) (Polyangium cellulosum (strain So ce56)).